Here is a 391-residue protein sequence, read N- to C-terminus: GATA-binding factor 6-B (391 aa).

The segment covering 57–69 (GTHSVNSHWSQAT) has biased composition (polar residues). The tract at residues 57-107 (GTHSVNSHWSQATSESSSYSSSSPHPSSRYHYSPSPPMANGSTRDTGYSSS) is disordered. Positions 70–89 (SESSSYSSSSPHPSSRYHYS) are enriched in low complexity. The span at 96-107 (NGSTRDTGYSSS) shows a compositional bias: polar residues. 2 GATA-type zinc fingers span residues 182-206 (CVNC…CNAC) and 236-260 (CANC…CNAC). Residues 277-334 (KEGIQTRKRKPKNLNKSKSSSSNGNSSHHITMTPTSTTSSTNSDDCIKNGSPSQNTAP) are disordered. Residues 282–291 (TRKRKPKNLN) show a composition bias toward basic residues. Over residues 292 to 319 (KSKSSSSNGNSSHHITMTPTSTTSSTNS) the composition is skewed to low complexity.

In terms of tissue distribution, in embryos, expressed in the presumptive heart mesoderm. In adults, widely distributed but predominant in the heart.

The protein resides in the nucleus. Its function is as follows. Transcriptional activator that binds 5'-GATA-3'-containing motifs within gene promoters. Regulates cardiac-specific transcription during embryogenesis and thereby cardiogenesis. The protein is GATA-binding factor 6-B (gata6-b) of Xenopus laevis (African clawed frog).